A 155-amino-acid polypeptide reads, in one-letter code: Putative pre-16S rRNA nuclease (155 aa).

Belongs to the YqgF nuclease family.

It is found in the cytoplasm. In terms of biological role, could be a nuclease involved in processing of the 5'-end of pre-16S rRNA. The chain is Putative pre-16S rRNA nuclease from Xanthomonas axonopodis pv. citri (strain 306).